The sequence spans 75 residues: DNA-directed RNA polymerase subunit Rpo5 (75 aa).

This sequence belongs to the archaeal Rpo5/eukaryotic RPB5 RNA polymerase subunit family. As to quaternary structure, part of the RNA polymerase complex.

The protein resides in the cytoplasm. It catalyses the reaction RNA(n) + a ribonucleoside 5'-triphosphate = RNA(n+1) + diphosphate. DNA-dependent RNA polymerase (RNAP) catalyzes the transcription of DNA into RNA using the four ribonucleoside triphosphates as substrates. The protein is DNA-directed RNA polymerase subunit Rpo5 of Halobacterium salinarum (strain ATCC 700922 / JCM 11081 / NRC-1) (Halobacterium halobium).